Here is a 502-residue protein sequence, read N- to C-terminus: UDP-N-acetylmuramoylalanine--D-glutamate ligase (502 aa).

Glycine 129–threonine 135 lines the ATP pocket.

The protein belongs to the MurCDEF family.

The protein resides in the cytoplasm. It carries out the reaction UDP-N-acetyl-alpha-D-muramoyl-L-alanine + D-glutamate + ATP = UDP-N-acetyl-alpha-D-muramoyl-L-alanyl-D-glutamate + ADP + phosphate + H(+). Its pathway is cell wall biogenesis; peptidoglycan biosynthesis. In terms of biological role, cell wall formation. Catalyzes the addition of glutamate to the nucleotide precursor UDP-N-acetylmuramoyl-L-alanine (UMA). The polypeptide is UDP-N-acetylmuramoylalanine--D-glutamate ligase (Burkholderia ambifaria (strain MC40-6)).